Reading from the N-terminus, the 177-residue chain is B-phycoerythrin beta chain (177 aa).

(2R,3E)-phycoerythrobilin-binding positions include K28, N35, D39, C50, D54, C61, N72, 77 to 78 (RR), C82, R129, 147 to 148 (SQ), 154 to 158 (PQGDC), and C158. N72 carries the post-translational modification N4-methylasparagine.

It belongs to the phycobiliprotein family. Heterotetramer of 2 different alpha chains and 2 identical beta chains. The subunit composition could comprise any combination of 2 out of 4 different alpha units with an invariant beta unit. In terms of processing, contains three covalently linked phycoerythrobilin chromophores.

The protein localises to the plastid. The protein resides in the chloroplast thylakoid membrane. Its function is as follows. Light-harvesting photosynthetic tetrapyrrole chromophore-protein from the phycobiliprotein complex. The chain is B-phycoerythrin beta chain (cpeB) from Rhodomonas sp. (strain CS 24) (Chroomonas sp. (strain CS24)).